The sequence spans 174 residues: Shikimate kinase (174 aa).

15–20 serves as a coordination point for ATP; sequence GTGKST. Position 19 (S19) interacts with Mg(2+). D37, R61, and G82 together coordinate substrate. R120 contributes to the ATP binding site. Residue R138 participates in substrate binding.

The protein belongs to the shikimate kinase family. In terms of assembly, monomer. It depends on Mg(2+) as a cofactor.

The protein localises to the cytoplasm. It carries out the reaction shikimate + ATP = 3-phosphoshikimate + ADP + H(+). It participates in metabolic intermediate biosynthesis; chorismate biosynthesis; chorismate from D-erythrose 4-phosphate and phosphoenolpyruvate: step 5/7. Catalyzes the specific phosphorylation of the 3-hydroxyl group of shikimic acid using ATP as a cosubstrate. The sequence is that of Shikimate kinase from Staphylococcus aureus (strain NCTC 8325 / PS 47).